The sequence spans 276 residues: Protein FAM151B (276 aa).

The protein belongs to the menorin family.

In terms of biological role, essential for survival of retinal photoreceptor cells. The protein is Protein FAM151B (FAM151B) of Homo sapiens (Human).